We begin with the raw amino-acid sequence, 1133 residues long: MPVQAPQWTDFLSCPICTQTFDETIRKPISLGCGHTVCKMCLNKLHRKACPFDQTTINTDIELLPVNSALLQLVGAQVPEQQPITLCSGVEDTKHYEEAKKCVEELALYLKPLSSARGVGLNSTTQSVLSRPMQRKLVTLVHCQLVEEEGRIRAMRAARSLGERTVTELILQHQNPQQLSSNLWAAVRARGCQFLGPAMQEEALKLVLLALEDGSALSRKVLVLFVVQRLEPRFPQASKTSIGHVVQLLYRASCFKVTKRDEDSSLMQLKEEFRTYEALRREHDSQIVQIAMEAGLRIAPDQWSSLLYGDQSHKSHMQSIIDKLQTPASFAQSVQELTIALQRTGDPANLNRLRPHLELLANIDPSPDAPPPTWEQLENGLVAVRTVVHGLVDYIQNHSKKGADQQQPPQHSKYKTYMCRDMKQRGGCPRGASCTFAHSQEELEKFRKMNKRLVPRRPLSASLGQLNEVGLPSAAILPDEGAVDLPSRKPPALPNGIVSTGNTVTQLIPRGTDPSYDSSLKPGKIDHLSSSAPGSPPDLLESVPKSISALPVNPHSIPPRGPADLPPMPVTKPLQMVPRGSQLYPAQQTDVYYQDPRGAAPPFEPAPYQQGMYYTPPPQCVSRFVRPPPSAPEPAPPYLDHYPPYLQERVVNSQYGTQPQQYPPIYPSHYDGRRVYPAPSYTREEIFRESPIPIEIPPAAVPSYVPESRERYQQIESYYPVAPHPTQIRPSYLREPPYSRLPPPPQPHPSLDELHRRRKEIMAQLEERKVISPPPFAPSPTLPPTFHPEEFLDEDLKVAGKYKGNDYSQYSPWSCDTIGSYIGTKDAKPKDVVAAGSVEMMNVESKGMRDQRLDLQRRAAETSDDDLIPFGDRPTVSRFGAISRTSKTIYQGAGPMQAMAPQGAPTKSINISDYSPYGTHGGWGASPYSPHQNIPSQGHFSERERISMSEVASHGKPLPSAEREQLRLELQQLNHQISQQTQLRGLEAVSNRLVLQREANTLAGQSQPPPPPPPKWPGMISSEQLSLELHQVEREIGKRTRELSMENQCSLDMKSKLNTSKQAENGQPEPQNKVPAEDLTLTFSDVPNGSALTQENISLLSNKTSSLNLSEDPEGGGDNNDSQRSGVTPSSAP.

The Zn(2+) site is built by cysteine 14, cysteine 17, cysteine 33, histidine 35, cysteine 38, cysteine 50, and aspartate 53. The RING-type; degenerate zinc finger occupies 14–54 (CPICTQTFDETIRKPISLGCGHTVCKMCLNKLHRKACPFDQ). The segment at 89 to 173 (GVEDTKHYEE…RTVTELILQH (85 aa)) is HEPN-N. Residues 174–326 (QNPQQLSSNL…MQSIIDKLQT (153 aa)) are ROQ. The HEPN-C stretch occupies residues 327-396 (PASFAQSVQE…VVHGLVDYIQ (70 aa)). The segment at 413-441 (KYKTYMCRDMKQRGGCPRGASCTFAHSQE) adopts a C3H1-type zinc-finger fold. 4 positions are modified to phosphoserine: serine 462, serine 531, serine 535, and serine 863. Positions 505-542 (TQLIPRGTDPSYDSSLKPGKIDHLSSSAPGSPPDLLES) are disordered. 3 disordered regions span residues 1000–1019 (NTLA…WPGM), 1058–1078 (NTSK…PAED), and 1094–1133 (QENI…SSAP). The segment covering 1007-1016 (QPPPPPPPKW) has biased composition (pro residues). Residues 1058–1070 (NTSKQAENGQPEP) are compositionally biased toward polar residues. The segment covering 1096 to 1110 (NISLLSNKTSSLNLS) has biased composition (low complexity). Serine 1110 is modified (phosphoserine). The span at 1119 to 1133 (NNDSQRSGVTPSSAP) shows a compositional bias: polar residues.

In terms of assembly, able to homodimerize. Interacts with DDX6 and EDC4. Interacts with CCR4-NOT deadenylase complex. Interacts with RC3H1; the interaction is RNA independent. In terms of processing, proteolytically cleaved after Arg-510 and Arg-579 by MALT1 in activated CD4(+) T cells; cleavage at Arg-510 and Arg-579 is critical for promoting RC3H1 degradation in response to T-cell receptor (TCR) stimulation, and hence is necessary for prolonging the stability of a set of mRNAs controlling Th17 cell differentiation. Widely expressed. Expressed at higher level in cerebellum, spleen, ovary and liver.

The protein localises to the cytoplasm. Its subcellular location is the P-body. It localises to the cytoplasmic granule. It catalyses the reaction S-ubiquitinyl-[E2 ubiquitin-conjugating enzyme]-L-cysteine + [acceptor protein]-L-lysine = [E2 ubiquitin-conjugating enzyme]-L-cysteine + N(6)-ubiquitinyl-[acceptor protein]-L-lysine.. It functions in the pathway protein modification; protein ubiquitination. Post-transcriptional repressor of mRNAs containing a conserved stem loop motif, called constitutive decay element (CDE), which is often located in the 3'-UTR, as in HMGXB3, ICOS, IER3, NFKBID, NFKBIZ, PPP1R10, TNF, TNFRSF4 and in many more mRNAs. Cleaves translationally inactive mRNAs harboring a stem-loop (SL), often located in their 3'-UTRs, during the early phase of inflammation in a helicase UPF1-independent manner. Binds to CDE and promotes mRNA deadenylation and degradation. This process does not involve miRNAs. In follicular helper T (Tfh) cells, represses of ICOS and TNFRSF4 expression, thus preventing spontaneous Tfh cell differentiation, germinal center B-cell differentiation in the absence of immunization and autoimmunity. In resting or LPS-stimulated macrophages, controls inflammation by suppressing TNF expression. Also recognizes CDE in its own mRNA and in that of paralogous RC3H2, possibly leading to feedback loop regulation. Recognizes and binds mRNAs containing a hexaloop stem-loop motif, called alternative decay element (ADE). Together with ZC3H12A, destabilizes TNFRSF4/OX40 mRNA by binding to the conserved stem loop structure in its 3'UTR. Able to interact with double-stranded RNA (dsRNA). miRNA-binding protein that regulates microRNA homeostasis. Enhances DICER-mediated processing of pre-MIR146a but reduces mature MIR146a levels through an increase of 3' end uridylation. Both inhibits ICOS mRNA expression and they may act together to exert the suppression. Acts as a ubiquitin E3 ligase. Pairs with E2 enzymes UBE2A, UBE2B, UBE2D2, UBE2F, UBE2G1, UBE2G2 and UBE2L3 and produces polyubiquitin chains. Shows the strongest activity when paired with UBE2N:UBE2V1 or UBE2N:UBE2V2 E2 complexes and generate both short and long polyubiquitin chains. This Homo sapiens (Human) protein is Roquin-1.